An 804-amino-acid polypeptide reads, in one-letter code: ABC transporter aclQ (804 aa).

9 helical membrane-spanning segments follow: residues 3–23, 52–72, 97–117, 119–139, 155–175, 206–226, 239–259, 349–369, and 373–393; these read LAVL…ISYL, FTAI…SITI, IAVF…PFSP, LSHS…LAMF, LQLG…ALYF, HGGW…LWPS, FVLL…LGIV, LVFQ…YFLI, and AFYS…TIYM. An ABC transmembrane type-1 domain is found at 236-518; that stretch reads IFCFVLLVIQ…FGSFYTQVQN (283 aa). N-linked (GlcNAc...) asparagine glycosylation occurs at asparagine 460. Helical transmembrane passes span 464-484 and 489-509; these read NLLF…QISA and VAMF…LNFF. In terms of domain architecture, ABC transporter spans 552 to 786; that stretch reads VEFTHVNFAY…NGMYSQMWAK (235 aa). ATP is bound at residue 585-592; sequence GESGSGKS. N-linked (GlcNAc...) asparagine glycans are attached at residues asparagine 639 and asparagine 797.

This sequence belongs to the ABC transporter superfamily. ABCB family. Heavy Metal importer (TC 3.A.1.210) subfamily.

The protein localises to the membrane. Functionally, ABC transporter; part of the gene cluster that mediates the biosynthesis of aspirochlorine (or antibiotic A30641), an unusual halogenated spiro compound with distinctive antifungal properties due to selective inhibition of protein biosynthesis, and which is also active against bacteria, viruses, and murine tumor cells. The sequence is that of ABC transporter aclQ from Aspergillus oryzae (strain ATCC 42149 / RIB 40) (Yellow koji mold).